Reading from the N-terminus, the 207-residue chain is Octanoyltransferase (207 aa).

The region spanning 27-203 (ADTEDELWVV…HLETQFTPKA (177 aa)) is the BPL/LPL catalytic domain. Residues 66 to 73 (RGGQITYH), 133 to 135 (SLG), and 146 to 148 (GLA) contribute to the substrate site. Residue cysteine 164 is the Acyl-thioester intermediate of the active site.

This sequence belongs to the LipB family.

It localises to the cytoplasm. The catalysed reaction is octanoyl-[ACP] + L-lysyl-[protein] = N(6)-octanoyl-L-lysyl-[protein] + holo-[ACP] + H(+). It participates in protein modification; protein lipoylation via endogenous pathway; protein N(6)-(lipoyl)lysine from octanoyl-[acyl-carrier-protein]: step 1/2. Catalyzes the transfer of endogenously produced octanoic acid from octanoyl-acyl-carrier-protein onto the lipoyl domains of lipoate-dependent enzymes. Lipoyl-ACP can also act as a substrate although octanoyl-ACP is likely to be the physiological substrate. The sequence is that of Octanoyltransferase from Neisseria meningitidis serogroup A / serotype 4A (strain DSM 15465 / Z2491).